We begin with the raw amino-acid sequence, 1400 residues long: DNA-directed RNA polymerase subunit beta' (1400 aa).

Residues cysteine 71, cysteine 73, cysteine 86, and cysteine 89 each coordinate Zn(2+). Mg(2+)-binding residues include aspartate 462, aspartate 464, and aspartate 466. Zn(2+) is bound by residues cysteine 811, cysteine 885, cysteine 892, and cysteine 895.

The protein belongs to the RNA polymerase beta' chain family. In terms of assembly, the RNAP catalytic core consists of 2 alpha, 1 beta, 1 beta' and 1 omega subunit. When a sigma factor is associated with the core the holoenzyme is formed, which can initiate transcription. Mg(2+) is required as a cofactor. Requires Zn(2+) as cofactor.

It carries out the reaction RNA(n) + a ribonucleoside 5'-triphosphate = RNA(n+1) + diphosphate. Functionally, DNA-dependent RNA polymerase catalyzes the transcription of DNA into RNA using the four ribonucleoside triphosphates as substrates. In Brucella canis (strain ATCC 23365 / NCTC 10854 / RM-666), this protein is DNA-directed RNA polymerase subunit beta'.